The primary structure comprises 143 residues: Flagellar assembly factor FliW (143 aa).

Belongs to the FliW family. In terms of assembly, interacts with translational regulator CsrA and flagellin(s).

The protein localises to the cytoplasm. Acts as an anti-CsrA protein, binds CsrA and prevents it from repressing translation of its target genes, one of which is flagellin. Binds to flagellin and participates in the assembly of the flagellum. The polypeptide is Flagellar assembly factor FliW (Clostridium botulinum (strain Okra / Type B1)).